We begin with the raw amino-acid sequence, 320 residues long: Apolipoprotein E (320 aa).

Positions 1–18 (MKVLWAALLVAFLAGCQG) are cleaved as a signal peptide. 8 repeat units span residues 82–103 (ALMDETMKELKAYKSELEEQLS), 104–125 (PVAEETRARLSKELQAAQARLG), 126–147 (ADMEDVRSRLAQYRSEVQAMLG), 148–169 (QSTEELRARLASHLRKLRKRLL), 170–191 (RDVDDLQKRLAVYQAGAREGAE), 192–213 (RGVSAIRERLGPLVEQGRARAA), 214–236 (TVGSSLAGQPLQERAQAWGERLR), and 237–258 (ARMEEVGSRTRDRLDEVKEQVE). Residues 82 to 258 (ALMDETMKEL…RLDEVKEQVE (177 aa)) form an 8 X 22 AA approximate tandem repeats region. At methionine 145 the chain carries Methionine sulfoxide. Residue serine 149 is modified to Phosphoserine. An LDL and other lipoprotein receptors binding region spans residues 160 to 170 (HLRKLRKRLLR). A heparin-binding site is contributed by 164–167 (LRKR). The segment at 212-293 (AATVGSSLAG…SWFEPLVEDM (82 aa)) is lipid-binding and lipoprotein association. 232 to 239 (GERLRARM) is a binding site for heparin. The homooligomerization stretch occupies residues 269–320 (QQMRLQAEAFQARLKSWFEPLVEDMQRQWAGLVEKVQAAVGASAAPVPSDNH). The specificity for association with VLDL stretch occupies residues 281-293 (RLKSWFEPLVEDM).

Belongs to the apolipoprotein A1/A4/E family. As to quaternary structure, homotetramer. May interact with ABCA1; functionally associated with ABCA1 in the biogenesis of HDLs. May interact with APP/A4 amyloid-beta peptide; the interaction is extremely stable in vitro but its physiological significance is unclear. May interact with MAPT. May interact with MAP2. In the cerebrospinal fluid, interacts with secreted SORL1. Interacts with PMEL; this allows the loading of PMEL luminal fragment on ILVs to induce fibril nucleation. Post-translationally, APOE exists as multiple glycosylated and sialylated glycoforms within cells and in plasma. The extent of glycosylation and sialylation are tissue and context specific. Glycated in plasma VLDL. In terms of processing, phosphorylated by FAM20C in the extracellular medium.

The protein localises to the secreted. The protein resides in the extracellular space. It localises to the extracellular matrix. Its subcellular location is the extracellular vesicle. It is found in the endosome. The protein localises to the multivesicular body. In terms of biological role, APOE is an apolipoprotein, a protein associating with lipid particles, that mainly functions in lipoprotein-mediated lipid transport between organs via the plasma and interstitial fluids. APOE is a core component of plasma lipoproteins and is involved in their production, conversion and clearance. Apolipoproteins are amphipathic molecules that interact both with lipids of the lipoprotein particle core and the aqueous environment of the plasma. As such, APOE associates with chylomicrons, chylomicron remnants, very low density lipoproteins (VLDL) and intermediate density lipoproteins (IDL) but shows a preferential binding to high-density lipoproteins (HDL). It also binds a wide range of cellular receptors including the LDL receptor/LDLR, the LDL receptor-related proteins LRP1, LRP2 and LRP8 and the very low-density lipoprotein receptor/VLDLR that mediate the cellular uptake of the APOE-containing lipoprotein particles. Finally, APOE also has a heparin-binding activity and binds heparan-sulfate proteoglycans on the surface of cells, a property that supports the capture and the receptor-mediated uptake of APOE-containing lipoproteins by cells. A main function of APOE is to mediate lipoprotein clearance through the uptake of chylomicrons, VLDLs, and HDLs by hepatocytes. APOE is also involved in the biosynthesis by the liver of VLDLs as well as their uptake by peripheral tissues ensuring the delivery of triglycerides and energy storage in muscle, heart and adipose tissues. By participating in the lipoprotein-mediated distribution of lipids among tissues, APOE plays a critical role in plasma and tissues lipid homeostasis. APOE is also involved in two steps of reverse cholesterol transport, the HDLs-mediated transport of cholesterol from peripheral tissues to the liver, and thereby plays an important role in cholesterol homeostasis. First, it is functionally associated with ABCA1 in the biogenesis of HDLs in tissues. Second, it is enriched in circulating HDLs and mediates their uptake by hepatocytes. APOE also plays an important role in lipid transport in the central nervous system, regulating neuron survival and sprouting. This is Apolipoprotein E (APOE) from Plecturocebus moloch (Dusky titi monkey).